We begin with the raw amino-acid sequence, 393 residues long: G protein-activated inward rectifier potassium channel 3 (393 aa).

The tract at residues 1–23 (MAQENAAFSPGSEEPPRRRGRQR) is disordered. At 1-57 (MAQENAAFSPGSEEPPRRRGRQRYVEKDGRCNVQQGNVRETYRYLTDLFTTLVDLQW) the chain is on the cytoplasmic side. The chain crosses the membrane as a helical span at residues 58-82 (RLSLLFFVLAYALTWLFFGAIWWLI). Residues 83–106 (AYGRGDLEHLEDTAWTPCVNNLNG) lie on the Extracellular side of the membrane. Residues 107–118 (FVAAFLFSIETE) constitute an intramembrane region (helical; Pore-forming). The segment at residues 119–125 (TTIGYGH) is an intramembrane region (pore-forming). The Selectivity filter motif lies at 120-125 (TIGYGH). Topologically, residues 126–134 (RVITDQCPE) are extracellular. The chain crosses the membrane as a helical span at residues 135–156 (GIVLLLLQAILGSMVNAFMVGC). The Cytoplasmic segment spans residues 157-393 (MFVKISQPNK…LPPPESESKV (237 aa)). A disordered region spans residues 360-393 (KVEEEGAGEGAGAGDGADKEQNGCLPPPESESKV). Positions 384–393 (LPPPESESKV) are enriched in pro residues. Residues 390 to 393 (ESKV) carry the PDZ-binding motif.

The protein belongs to the inward rectifier-type potassium channel (TC 1.A.2.1) family. KCNJ9 subfamily. As to quaternary structure, associates with KCNJ3/GIRK1 to form a G-protein-activated heteromultimer pore-forming unit. Interacts (via PDZ-binding motif) with SNX27 (via PDZ domain); the interaction is required when endocytosed to prevent degradation in lysosomes and promote recycling to the plasma membrane.

The protein localises to the membrane. It catalyses the reaction K(+)(in) = K(+)(out). Its function is as follows. This receptor is controlled by G proteins. Inward rectifier potassium channels are characterized by a greater tendency to allow potassium to flow into the cell rather than out of it. Their voltage dependence is regulated by the concentration of extracellular potassium; as external potassium is raised, the voltage range of the channel opening shifts to more positive voltages. The inward rectification is mainly due to the blockage of outward current by internal magnesium. Unable to produce channel activity when expressed alone but forms a functional channel in association with KCNJ3/GIRK1. This Rattus norvegicus (Rat) protein is G protein-activated inward rectifier potassium channel 3 (Kcnj9).